The following is a 103-amino-acid chain: Pyrimidine/purine nucleoside phosphorylase (103 aa).

It belongs to the nucleoside phosphorylase PpnP family.

It catalyses the reaction a purine D-ribonucleoside + phosphate = a purine nucleobase + alpha-D-ribose 1-phosphate. The catalysed reaction is adenosine + phosphate = alpha-D-ribose 1-phosphate + adenine. It carries out the reaction cytidine + phosphate = cytosine + alpha-D-ribose 1-phosphate. The enzyme catalyses guanosine + phosphate = alpha-D-ribose 1-phosphate + guanine. It catalyses the reaction inosine + phosphate = alpha-D-ribose 1-phosphate + hypoxanthine. The catalysed reaction is thymidine + phosphate = 2-deoxy-alpha-D-ribose 1-phosphate + thymine. It carries out the reaction uridine + phosphate = alpha-D-ribose 1-phosphate + uracil. The enzyme catalyses xanthosine + phosphate = alpha-D-ribose 1-phosphate + xanthine. Its function is as follows. Catalyzes the phosphorolysis of diverse nucleosides, yielding D-ribose 1-phosphate and the respective free bases. Can use uridine, adenosine, guanosine, cytidine, thymidine, inosine and xanthosine as substrates. Also catalyzes the reverse reactions. This Methylococcus capsulatus (strain ATCC 33009 / NCIMB 11132 / Bath) protein is Pyrimidine/purine nucleoside phosphorylase.